The following is a 209-amino-acid chain: Glutathione S-transferase D1 (209 aa).

Residues 1–81 form the GST N-terminal domain; that stretch reads MVDFYYLPGS…YLVEKYGKTD (81 aa). Glutathione is bound by residues serine 10, 51–53, and 65–67; these read HTI and ESR. The GST C-terminal domain occupies 87-208; sequence CPKKRAVINQ…AGCLEFKKYF (122 aa).

This sequence belongs to the GST superfamily. Delta family. Homodimer.

It catalyses the reaction RX + glutathione = an S-substituted glutathione + a halide anion + H(+). It carries out the reaction 1,1,1-trichloro-2,2-bis(4-chlorophenyl)ethane = 1,1-dichloro-2,2-bis(4-chlorophenyl)ethylene + chloride + H(+). Its function is as follows. Conjugation of reduced glutathione to a wide number of exogenous and endogenous hydrophobic electrophiles. Has DDT dehydrochlorinase activity. May be involved in detoxification. This Drosophila melanogaster (Fruit fly) protein is Glutathione S-transferase D1.